We begin with the raw amino-acid sequence, 180 residues long: ATP synthase subunit delta (180 aa).

This sequence belongs to the ATPase delta chain family. In terms of assembly, F-type ATPases have 2 components, F(1) - the catalytic core - and F(0) - the membrane proton channel. F(1) has five subunits: alpha(3), beta(3), gamma(1), delta(1), epsilon(1). F(0) has three main subunits: a(1), b(2) and c(10-14). The alpha and beta chains form an alternating ring which encloses part of the gamma chain. F(1) is attached to F(0) by a central stalk formed by the gamma and epsilon chains, while a peripheral stalk is formed by the delta and b chains.

It is found in the cell membrane. In terms of biological role, f(1)F(0) ATP synthase produces ATP from ADP in the presence of a proton or sodium gradient. F-type ATPases consist of two structural domains, F(1) containing the extramembraneous catalytic core and F(0) containing the membrane proton channel, linked together by a central stalk and a peripheral stalk. During catalysis, ATP synthesis in the catalytic domain of F(1) is coupled via a rotary mechanism of the central stalk subunits to proton translocation. This protein is part of the stalk that links CF(0) to CF(1). It either transmits conformational changes from CF(0) to CF(1) or is implicated in proton conduction. This chain is ATP synthase subunit delta, found in Alkaliphilus oremlandii (strain OhILAs) (Clostridium oremlandii (strain OhILAs)).